The chain runs to 558 residues: Chaperonin GroEL 1 (558 aa).

ATP contacts are provided by residues 29 to 32 (TLGP), 86 to 90 (DGTTT), glycine 413, and aspartate 494.

It belongs to the chaperonin (HSP60) family. Forms a cylinder of 14 subunits composed of two heptameric rings stacked back-to-back. Interacts with the co-chaperonin GroES.

It is found in the cytoplasm. The catalysed reaction is ATP + H2O + a folded polypeptide = ADP + phosphate + an unfolded polypeptide.. In terms of biological role, together with its co-chaperonin GroES, plays an essential role in assisting protein folding. The GroEL-GroES system forms a nano-cage that allows encapsulation of the non-native substrate proteins and provides a physical environment optimized to promote and accelerate protein folding. This is Chaperonin GroEL 1 from Acaryochloris marina (strain MBIC 11017).